A 448-amino-acid chain; its full sequence is Trigger factor (448 aa).

The 87-residue stretch at 167 to 253 (GSIVRVDFVE…VKDIKRRDIP (87 aa)) folds into the PPIase FKBP-type domain.

Belongs to the FKBP-type PPIase family. Tig subfamily.

The protein localises to the cytoplasm. It carries out the reaction [protein]-peptidylproline (omega=180) = [protein]-peptidylproline (omega=0). In terms of biological role, involved in protein export. Acts as a chaperone by maintaining the newly synthesized protein in an open conformation. Functions as a peptidyl-prolyl cis-trans isomerase. The polypeptide is Trigger factor (Borrelia recurrentis (strain A1)).